The sequence spans 55 residues: MPQLNPNPWFYIMLMSWLTFSLIIQPELLSFTLTNPLSNKTSTTTRSSPWTWPWT.

Residues 7-29 form a helical membrane-spanning segment; sequence NPWFYIMLMSWLTFSLIIQPELL.

This sequence belongs to the ATPase protein 8 family. In terms of assembly, component of the ATP synthase complex composed at least of ATP5F1A/subunit alpha, ATP5F1B/subunit beta, ATP5MC1/subunit c (homooctomer), MT-ATP6/subunit a, MT-ATP8/subunit 8, ATP5ME/subunit e, ATP5MF/subunit f, ATP5MG/subunit g, ATP5MK/subunit k, ATP5MJ/subunit j, ATP5F1C/subunit gamma, ATP5F1D/subunit delta, ATP5F1E/subunit epsilon, ATP5PF/subunit F6, ATP5PB/subunit b, ATP5PD/subunit d, ATP5PO/subunit OSCP. ATP synthase complex consists of a soluble F(1) head domain (subunits alpha(3) and beta(3)) - the catalytic core - and a membrane F(0) domain - the membrane proton channel (subunits c, a, 8, e, f, g, k and j). These two domains are linked by a central stalk (subunits gamma, delta, and epsilon) rotating inside the F1 region and a stationary peripheral stalk (subunits F6, b, d, and OSCP).

It is found in the mitochondrion membrane. Subunit 8, of the mitochondrial membrane ATP synthase complex (F(1)F(0) ATP synthase or Complex V) that produces ATP from ADP in the presence of a proton gradient across the membrane which is generated by electron transport complexes of the respiratory chain. ATP synthase complex consist of a soluble F(1) head domain - the catalytic core - and a membrane F(1) domain - the membrane proton channel. These two domains are linked by a central stalk rotating inside the F(1) region and a stationary peripheral stalk. During catalysis, ATP synthesis in the catalytic domain of F(1) is coupled via a rotary mechanism of the central stalk subunits to proton translocation. In vivo, can only synthesize ATP although its ATP hydrolase activity can be activated artificially in vitro. Part of the complex F(0) domain. The chain is ATP synthase F(0) complex subunit 8 from Musophaga violacea (Violet turaco).